A 153-amino-acid polypeptide reads, in one-letter code: 6,7-dimethyl-8-ribityllumazine synthase (153 aa).

5-amino-6-(D-ribitylamino)uracil is bound by residues Phe-22, 56-58, and 80-82; these read AFE and TVI. (2S)-2-hydroxy-3-oxobutyl phosphate is bound at residue 85–86; the sequence is ST. His-88 (proton donor) is an active-site residue. Phe-113 contributes to the 5-amino-6-(D-ribitylamino)uracil binding site. Arg-127 serves as a coordination point for (2S)-2-hydroxy-3-oxobutyl phosphate.

This sequence belongs to the DMRL synthase family. Forms an icosahedral capsid composed of 60 subunits, arranged as a dodecamer of pentamers.

It catalyses the reaction (2S)-2-hydroxy-3-oxobutyl phosphate + 5-amino-6-(D-ribitylamino)uracil = 6,7-dimethyl-8-(1-D-ribityl)lumazine + phosphate + 2 H2O + H(+). Its pathway is cofactor biosynthesis; riboflavin biosynthesis; riboflavin from 2-hydroxy-3-oxobutyl phosphate and 5-amino-6-(D-ribitylamino)uracil: step 1/2. Catalyzes the formation of 6,7-dimethyl-8-ribityllumazine by condensation of 5-amino-6-(D-ribitylamino)uracil with 3,4-dihydroxy-2-butanone 4-phosphate. This is the penultimate step in the biosynthesis of riboflavin. This chain is 6,7-dimethyl-8-ribityllumazine synthase, found in Actinobacillus pleuropneumoniae serotype 5b (strain L20).